A 215-amino-acid chain; its full sequence is Ceramide-1-phosphate transfer protein (215 aa).

The an N-acylsphingoid base 1-phosphate site is built by D57, K61, R107, R111, and H151.

The protein belongs to the GLTP family.

Its subcellular location is the cytoplasm. It is found in the cytosol. The protein localises to the golgi apparatus. It localises to the trans-Golgi network membrane. The protein resides in the cell membrane. Its subcellular location is the endosome membrane. It is found in the nucleus outer membrane. It carries out the reaction N-(hexadecanoyl)-sphing-4-enine-1-phosphate(in) = N-(hexadecanoyl)-sphing-4-enine-1-phosphate(out). The catalysed reaction is N-(9Z-octadecenoyl)-sphing-4-enine-1-phosphate(in) = N-(9Z-octadecenoyl)-sphing-4-enine-1-phosphate(out). In terms of biological role, mediates the intracellular transfer of ceramide-1-phosphate (C1P) between organelle membranes and the cell membrane. Required for normal structure of the Golgi stacks. Can bind phosphoceramides with a variety of aliphatic chains, but has a preference for lipids with saturated C16:0 or monounsaturated C18:1 aliphatic chains, and is inefficient with phosphoceramides containing lignoceryl (C24:0). Plays a role in the regulation of the cellular levels of ceramide-1-phosphate, and thereby contributes to the regulation of phospholipase PLA2G4A activity and the release of arachidonic acid. Has no activity with galactosylceramide, lactosylceramide, sphingomyelin, phosphatidylcholine, phosphatidic acid and ceramide. C1P transfer is stimulated by phosphatidylserine in C1P source vesicles. Regulates autophagy and pyroptosis, but not apoptosis. The protein is Ceramide-1-phosphate transfer protein (cptp) of Xenopus tropicalis (Western clawed frog).